The chain runs to 369 residues: Aspartate beta-hydroxylase domain-containing protein 2 (369 aa).

Residues 1–58 (MVWAPLGPPRTDCLTLLHTPSKDSPKMSLEWLVAWSWSLDGLRDCIATGIQSVRDCDT) are Cytoplasmic-facing. Residues 59 to 79 (TAVITVACLLVLFVWYCYHVG) traverse the membrane as a helical segment. Residues 80–369 (REQPRPYVSV…ALDFIFAPGR (290 aa)) lie on the Lumenal side of the membrane. N211 carries N-linked (GlcNAc...) asparagine glycosylation. 2 residues coordinate 2-oxoglutarate: W228 and S272. H283 serves as a coordination point for Fe cation. 292 to 294 (RCH) is a 2-oxoglutarate binding site. H328 lines the Fe cation pocket. Residue R341 coordinates 2-oxoglutarate.

The protein belongs to the aspartyl/asparaginyl beta-hydroxylase family. Fe cation is required as a cofactor.

It localises to the membrane. May function as 2-oxoglutarate-dependent dioxygenase. The protein is Aspartate beta-hydroxylase domain-containing protein 2 (ASPHD2) of Homo sapiens (Human).